Reading from the N-terminus, the 105-residue chain is Large ribosomal subunit protein bL21 (105 aa).

The protein belongs to the bacterial ribosomal protein bL21 family. In terms of assembly, part of the 50S ribosomal subunit. Contacts protein L20.

Functionally, this protein binds to 23S rRNA in the presence of protein L20. In Aliarcobacter butzleri (strain RM4018) (Arcobacter butzleri), this protein is Large ribosomal subunit protein bL21.